A 652-amino-acid chain; its full sequence is DNA ligase (652 aa).

Residues 29–33, 78–79, and glutamate 107 contribute to the NAD(+) site; these read DSEYD and SL. Lysine 109 acts as the N6-AMP-lysine intermediate in catalysis. Positions 130, 164, 278, and 302 each coordinate NAD(+). Zn(2+)-binding residues include cysteine 395, cysteine 398, cysteine 413, and cysteine 418. The BRCT domain occupies 577 to 652; the sequence is DQQAALFGLT…IEDEDWLLNL (76 aa).

It belongs to the NAD-dependent DNA ligase family. LigA subfamily. Requires Mg(2+) as cofactor. Mn(2+) serves as cofactor.

It carries out the reaction NAD(+) + (deoxyribonucleotide)n-3'-hydroxyl + 5'-phospho-(deoxyribonucleotide)m = (deoxyribonucleotide)n+m + AMP + beta-nicotinamide D-nucleotide.. Its function is as follows. DNA ligase that catalyzes the formation of phosphodiester linkages between 5'-phosphoryl and 3'-hydroxyl groups in double-stranded DNA using NAD as a coenzyme and as the energy source for the reaction. It is essential for DNA replication and repair of damaged DNA. This is DNA ligase from Streptococcus equi subsp. equi (strain 4047).